Consider the following 777-residue polypeptide: Semaphorin-4F (777 aa).

Residues 1–40 (MLARAERPRPGPRPPPVSLFPPPSSLLLLLLAMLSAPVCG) form the signal peptide. Over 41 to 667 (RVPRSVPRTS…PANRAHTVVG (627 aa)) the chain is Extracellular. Positions 48-516 (RTSLPISEAD…SHTEVTQVNT (469 aa)) constitute a Sema domain. A glycan (N-linked (GlcNAc...) asparagine) is linked at N70. C118 and C128 form a disulfide bridge. Residue N139 is glycosylated (N-linked (GlcNAc...) asparagine). Disulfide bonds link C146-C155, C279-C390, and C303-C349. N515 carries an N-linked (GlcNAc...) asparagine glycan. One can recognise a PSI domain in the interval 518-569 (NCGRLQSCSECILAQDPVCAWSFRLDACVAHAGEHRGMVQDIESADVSSLCP). 3 disulfides stabilise this stretch: C519–C536, C528–C545, and C593–C634. The region spanning 586-641 (VGHVVLPCSPSSAWASCVWHQPSGVTSLTPRRDGLEVVVTPGAMGAYACECQEGGA) is the Ig-like C2-type domain. Residues 668 to 688 (AGLVGFFLGVLAASLTLLLIG) traverse the membrane as a helical segment. Residues 689–777 (RRQQRRRQRE…PLATCDETSI (89 aa)) lie on the Cytoplasmic side of the membrane. Residues 703-742 (DKVGLDLGAPPSGTTSYSQDPPSPSPEDERLPLALGKRGS) are disordered. Residues S725 and S727 each carry the phosphoserine modification. The short motif at 775-777 (TSI) is the PDZ-binding element.

The protein belongs to the semaphorin family. Interacts (via PDZ-binding motif) with DLG4/SAP90 (via PDZ domain 2); this interaction may promote translocation of DLG4/SAP90 to the membrane. As to expression, expressed throughout the adult brain, where it shows particularly strong expression in the hippocampus, corpus callosum, granular layer and deep nuclei of the cerebellum, and the mitral layer of the olfactory bulb (at protein level). At the cellular level, detected in neuronal precursors, postmitotic neurons, pyramidal neurons, and glial cells including mature oligodendocytes and oligodendroglial precursor cells (at protein level).

It is found in the cell membrane. The protein resides in the postsynaptic density. It localises to the perikaryon. Its subcellular location is the cell projection. The protein localises to the dendrite. Probable cell surface receptor that regulates oligodendroglial precursor cell migration. Might also regulate differentiation of oligodendroglial precursor cells. Has growth cone collapse activity against retinal ganglion-cell axons. This is Semaphorin-4F (Sema4f) from Mus musculus (Mouse).